A 563-amino-acid chain; its full sequence is Membrane protein insertase YidC (563 aa).

The chain crosses the membrane as a helical span at residues 1 to 21 (MDIKRTILIVALAIVTYVGVL). Residues 43–62 (APGIPDTAAGTNGSASADVP) form a disordered region. 5 helical membrane passes run 344 to 364 (LELT…FWLL), 370 to 390 (ILGN…GLFF), 440 to 460 (LGGC…YWVL), 471 to 491 (WILW…PIIM), and 518 to 538 (PIIF…YWVV).

It belongs to the OXA1/ALB3/YidC family. Type 1 subfamily. Interacts with the Sec translocase complex via SecD. Specifically interacts with transmembrane segments of nascent integral membrane proteins during membrane integration.

The protein localises to the cell inner membrane. Its function is as follows. Required for the insertion and/or proper folding and/or complex formation of integral membrane proteins into the membrane. Involved in integration of membrane proteins that insert both dependently and independently of the Sec translocase complex, as well as at least some lipoproteins. Aids folding of multispanning membrane proteins. The polypeptide is Membrane protein insertase YidC (Pseudomonas syringae pv. syringae (strain B728a)).